The chain runs to 363 residues: GTPase Obg (363 aa).

Residues 1–159 (MKFLDEAKVY…KTIWLRLKLI (159 aa)) form the Obg domain. An OBG-type G domain is found at 160-327 (ADAGLVGLPN…VLRALRDIIV (168 aa)). GTP-binding positions include 166–173 (GLPNAGKS), 191–195 (FTTLH), 212–215 (DIPG), 279–282 (SQID), and 308–310 (SAV). 2 residues coordinate Mg(2+): serine 173 and threonine 193. The segment at 332–363 (EEKPAKAPKLRHRDMIVSEENNQGEDGADDQP) is disordered. Acidic residues predominate over residues 353-363 (NQGEDGADDQP).

Belongs to the TRAFAC class OBG-HflX-like GTPase superfamily. OBG GTPase family. As to quaternary structure, monomer. The cofactor is Mg(2+).

It localises to the cytoplasm. In terms of biological role, an essential GTPase which binds GTP, GDP and possibly (p)ppGpp with moderate affinity, with high nucleotide exchange rates and a fairly low GTP hydrolysis rate. Plays a role in control of the cell cycle, stress response, ribosome biogenesis and in those bacteria that undergo differentiation, in morphogenesis control. This chain is GTPase Obg, found in Rhizobium etli (strain ATCC 51251 / DSM 11541 / JCM 21823 / NBRC 15573 / CFN 42).